The sequence spans 213 residues: Large ribosomal subunit protein uL1 (213 aa).

This sequence belongs to the universal ribosomal protein uL1 family. Part of the 50S ribosomal subunit.

Binds directly to 23S rRNA. Probably involved in E site tRNA release. Functionally, protein L1 is also a translational repressor protein, it controls the translation of its operon by binding to its mRNA. This Picrophilus torridus (strain ATCC 700027 / DSM 9790 / JCM 10055 / NBRC 100828 / KAW 2/3) protein is Large ribosomal subunit protein uL1.